Consider the following 211-residue polypeptide: Arginine exporter protein ArgO (211 aa).

The next 6 helical transmembrane spans lie at 1–21 (MISYYFQGFALGAAMILPLGP), 37–57 (LMIALLCALSDLVLISAGIFG), 68–88 (LLALVTWGGVAFLLWYGFGAL), 111–131 (IIATMLAVTWLNPHVYLDTFV), 147–167 (WFALGTISASFLWFFGLALLA), and 179–199 (AQRIINILVGVVMWLIAFQLA).

The protein belongs to the LysE/ArgO transporter (TC 2.A.75) family.

Its subcellular location is the cell inner membrane. It carries out the reaction L-arginine(in) = L-arginine(out). Functionally, involved in the export of arginine. Important to control the intracellular level of arginine and the correct balance between arginine and lysine. The polypeptide is Arginine exporter protein ArgO (Salmonella choleraesuis (strain SC-B67)).